Here is a 144-residue protein sequence, read N- to C-terminus: RNA-binding protein 1 (144 aa).

Residues 11-84 (CKVYVGNLGS…TRIRVEMSSG (74 aa)) enclose the RRM domain. Residues 78–115 (RVEMSSGRSRDRRRGEGGSSGRSGSGRYRITPSARTTS) form a disordered region.

This sequence belongs to the splicing factor SR family. In terms of assembly, interacts with x16 (via Arg/Ser-rich region). Extensively phosphorylated on serine residues in the RS domain. In terms of processing, the tandem heptapeptide repeats in the C-terminal domain (CTD) can be highly phosphorylated. The phosphorylation activates Pol II. Phosphorylation occurs at residues 'Ser-2', 'Ser-5' and 'Ser-7' of the heptapeptide repeat and is mediated by P-TEFb. Dephosphorylated by the INTAC complex when transcripts are unfavorably configured for transcriptional elongation, leading to premature transcription termination: dephosphorylation is mediated by the mts/PP2A component of the INTAC complex. Ubiquitous.

The protein resides in the nucleus. Contributes to the activation of female-specific DSX splicing in vivo by recognizing the RBP1 target sequences within the purine-rich polypyrimidine tract of the female-specific 3' splice site. The chain is RNA-binding protein 1 (Rbp1) from Drosophila melanogaster (Fruit fly).